A 167-amino-acid polypeptide reads, in one-letter code: Secretion monitor (167 aa).

The first 36 residues, 1–36 (MIGILNRWRQFGRRYFWPHLLLGMVAASFGLPQASA), serve as a signal peptide directing secretion.

This sequence belongs to the SecM family.

It localises to the cytoplasm. It is found in the cytosol. The protein resides in the periplasm. In terms of biological role, regulates secA expression by translational coupling of the secM secA operon. Translational pausing at a specific Pro residue 5 residues before the end of the protein may allow disruption of a mRNA repressor helix that normally suppresses secA translation initiation. This is Secretion monitor from Erwinia tasmaniensis (strain DSM 17950 / CFBP 7177 / CIP 109463 / NCPPB 4357 / Et1/99).